Here is a 241-residue protein sequence, read N- to C-terminus: Xyloglucan-specific endo-beta-1,4-glucanase A (241 aa).

Positions 1 to 16 (MKVLALSALLSLASAA) are cleaved as a signal peptide. The N-linked (GlcNAc...) asparagine glycan is linked to asparagine 47.

The protein belongs to the glycosyl hydrolase 12 (cellulase H) family.

It localises to the secreted. It carries out the reaction xyloglucan + H2O = xyloglucan oligosaccharides.. Its function is as follows. Catalyzes endohydrolysis of 1,4-beta-D-glucosidic linkages in xyloglucan with retention of the beta-configuration of the glycosyl residues. Specific for xyloglucan and does not hydrolyze other cell wall components. This chain is Xyloglucan-specific endo-beta-1,4-glucanase A (xgeA), found in Aspergillus niger.